The chain runs to 151 residues: Probable cGMP 3',5'-cyclic phosphodiesterase subunit delta (151 aa).

This sequence belongs to the PDE6D/unc-119 family. In terms of assembly, interacts with Pde6.

Its subcellular location is the nucleus. The protein localises to the cytoplasm. The protein is Probable cGMP 3',5'-cyclic phosphodiesterase subunit delta of Drosophila sechellia (Fruit fly).